We begin with the raw amino-acid sequence, 343 residues long: Endoplasmic reticulum-resident calcium binding protein (343 aa).

A signal peptide spans 1-26 (MMKINLYKLLCFICVIFLLHKNVVRS). EF-hand domains follow at residues 59 to 94 (GAKERIEKLFHLIDKNNDKEITEEELNTWSSFLKNE), 95 to 130 (IFLKQVQAEMGQIDSDKDGFISLNELNDAFAQNLDA), 135 to 170 (KHSEGLLKRFQIVDKDKDGKLSINEVGLLIDPMKDE), 172 to 207 (LKELEINEILEHHDVNKDGKISLDEFKQTRSDESSG), and 210 to 245 (KDDEMALDDFNFFDANKDGFIDKEEIIKVYFDPAHE). Positions 72, 74, 76, 78, 83, 108, 110, 112, 119, 148, 150, 152, 154, 159, 185, 187, 189, 191, 196, 223, 225, 227, and 234 each coordinate Ca(2+). The segment covering 313-331 (EDDDMDADNTEDDKDEADD) has biased composition (acidic residues). The tract at residues 313-343 (EDDDMDADNTEDDKDEADDASQQKSPAIDEL) is disordered.

The protein belongs to the CREC family.

The protein localises to the endoplasmic reticulum. Calcium-binding protein. Required for schizont to ring transition. Required for the breakdown of the parasitophorous vacuole membrane during egress. Required for the proteolytic maturation of apical membrane antigen 1 (AMA-1) during egress. Required for the proteolytic maturation of subtilisin-like protease 1 (SUB1) during egress. Required for the proteolytic maturation of plasmepsin X (PMX) during egress. This chain is Endoplasmic reticulum-resident calcium binding protein, found in Plasmodium falciparum (isolate 3D7).